A 362-amino-acid polypeptide reads, in one-letter code: RING-H2 finger protein ATL52 (362 aa).

A helical membrane pass occupies residues 58–78; that stretch reads LIALIGILTSALILVSYYTLI. The RING-type; atypical zinc-finger motif lies at 142 to 184; that stretch reads CSVCLSEFEENESLRLLPKCNHAFHLPCIDTWLKSHSNCPLCR. Disordered regions lie at residues 252 to 271 and 296 to 333; these read DARSELQLPEERRETKDEDS and EDEEGESGGVGTSQRREEGEDGDGKTIPPTEANQRSGG. The segment covering 309-319 has biased composition (basic and acidic residues); the sequence is QRREEGEDGDG.

It belongs to the RING-type zinc finger family. ATL subfamily. In terms of tissue distribution, expressed in flowers.

The protein localises to the membrane. It catalyses the reaction S-ubiquitinyl-[E2 ubiquitin-conjugating enzyme]-L-cysteine + [acceptor protein]-L-lysine = [E2 ubiquitin-conjugating enzyme]-L-cysteine + N(6)-ubiquitinyl-[acceptor protein]-L-lysine.. It functions in the pathway protein modification; protein ubiquitination. The sequence is that of RING-H2 finger protein ATL52 (ATL52) from Arabidopsis thaliana (Mouse-ear cress).